The following is a 93-amino-acid chain: Large ribosomal subunit protein uL23 (93 aa).

It belongs to the universal ribosomal protein uL23 family. As to quaternary structure, part of the 50S ribosomal subunit. Contacts protein L29, and trigger factor when it is bound to the ribosome.

Its function is as follows. One of the early assembly proteins it binds 23S rRNA. One of the proteins that surrounds the polypeptide exit tunnel on the outside of the ribosome. Forms the main docking site for trigger factor binding to the ribosome. The protein is Large ribosomal subunit protein uL23 of Wolinella succinogenes (strain ATCC 29543 / DSM 1740 / CCUG 13145 / JCM 31913 / LMG 7466 / NCTC 11488 / FDC 602W) (Vibrio succinogenes).